The sequence spans 480 residues: Peptidase S41 family protein ustP (480 aa).

The interval cysteine 78 to lysine 97 is disordered. The tract at residues aspartate 134–valine 336 is peptidase S41 domain.

The protein belongs to the peptidase S41A family.

It functions in the pathway mycotoxin biosynthesis. Its function is as follows. Peptidase S41 family protein; part of the gene cluster that mediates the biosynthesis of the secondary metabolite ustiloxin B, an antimitotic tetrapeptide. First, ustA is processed by the subtilisin-like endoprotease Kex2 that is outside the ustiloxin B gene cluster, at the C-terminal side of Arg-Lys, after transfer to Golgi apparatus through the endoplasmic reticulum (ER). Cleavage by KEX2 generates 16 peptides YAIG-I to YAIG-XVI. To process the precursor peptide further, at least two peptidases are necessary to cleave the N-terminal and C-terminal sides of the Tyr-Ala-Ile-Gly core peptide which serves as backbone for the synthesis of ustiloxin B, through cyclization and modification of the tyrosine with a non-protein coding amino acid, norvaline. One of the two peptidases must be the serine peptidase ustP; and the other pepdidase is probably ustH. Macrocyclization of the core peptide derived from ustA requires the tyrosinase ustQ, as well as the homologous oxidases ustYa and ustYb, and leads to the production of the first cyclization product N-desmethylustiloxin F. For the formation of N-desmethylustiloxin F, three oxidation steps are required, hydroxylation at the benzylic position, hydroxylation at either the aromatic ring of Tyr or beta-position of Ile, and oxidative cyclization. UstQ may catalyze the oxidation of a phenol moiety, whereas the ustYa and ustYb are most likely responsible for the remaining two-step oxidations. N-desmethylustiloxin F is then methylated by ustM to yield ustiloxin F which in turn substrate of the cytochrome P450 monooxygenase ustC which catalyzes the formation of S-deoxyustiloxin H. The flavoprotein monooxygenases ustF1 and ustF2 then participate in the modification of the side chain of S-deoxyustiloxin H, leading to the synthesis of an oxime intermediate, via ustiloxin H. Finally, carboxylative dehydration performed by the cysteine desulfurase-like protein ustD yields ustiloxin B. This Aspergillus flavus (strain ATCC 200026 / FGSC A1120 / IAM 13836 / NRRL 3357 / JCM 12722 / SRRC 167) protein is Peptidase S41 family protein ustP.